The following is a 676-amino-acid chain: XK-related protein 5 (676 aa).

The next 7 helical transmembrane spans lie at 37–57 (WLALSVLLPGFLVQALSFLWF), 114–134 (LLEALLQTGPHLLLQAYVFLA), 140–160 (IVPGISALLSWSSLSWALVSY), 206–226 (VWVLVVGGAHWLVMTFWLVAQ), 239–259 (LFNLLVGAVFILCYINFWDSP), 266–286 (SFYLVMLLENSILLLLATDFL), and 294–314 (LWTVVGVLSGFLIGCASLVIY). Disordered regions lie at residues 336-362 (PIEDNKPESEPPPRAVDPTGEMPDSSS), 372-391 (TSLDKAPSPEQNTAEVGLGE), 495-538 (LEDN…KEGQ), and 598-661 (PIPG…IQRD). The span at 498-509 (NATTQKPPATQE) shows a compositional bias: polar residues.

It belongs to the XK family.

Its subcellular location is the cell membrane. This Mus musculus (Mouse) protein is XK-related protein 5.